We begin with the raw amino-acid sequence, 245 residues long: Intron-associated endonuclease 1 (245 aa).

A GIY-YIG domain is found at 1-88; it reads MKSGIYQIKN…IKELNSKING (88 aa).

To endonucleases of group I introns of fungi and phage. The cofactor is Mg(2+).

Its function is as follows. This endonuclease is specific to the thymidylate synthase (td) gene splice junction and is involved in intron homing. The protein is Intron-associated endonuclease 1 (ITEVIR) of Enterobacteria phage T4 (Bacteriophage T4).